The sequence spans 326 residues: DNA-directed RNA polymerase subunit alpha (326 aa).

Residues 1-231 (MQTALLKPKI…DQLSVFAALE (231 aa)) are alpha N-terminal domain (alpha-NTD). The segment at 247-326 (IDPILLRPVD…ENWPPAGLDK (80 aa)) is alpha C-terminal domain (alpha-CTD).

This sequence belongs to the RNA polymerase alpha chain family. Homodimer. The RNAP catalytic core consists of 2 alpha, 1 beta, 1 beta' and 1 omega subunit. When a sigma factor is associated with the core the holoenzyme is formed, which can initiate transcription.

The enzyme catalyses RNA(n) + a ribonucleoside 5'-triphosphate = RNA(n+1) + diphosphate. DNA-dependent RNA polymerase catalyzes the transcription of DNA into RNA using the four ribonucleoside triphosphates as substrates. The chain is DNA-directed RNA polymerase subunit alpha from Cupriavidus pinatubonensis (strain JMP 134 / LMG 1197) (Cupriavidus necator (strain JMP 134)).